The chain runs to 269 residues: MFKIYAVSDSIGETAEQVANATAYQFGSSVKVERVPYVKTFEDVNNLISIIKNPNEAMIISTIVLVDIREFLVQRCVESGIHISNVLGPCISLVSTILNKTPEYKPGAVWDMDKKYYKKIEAMEFAIRYDDSKDHSGIKHADIVLIGLSRTSKTPLSIYLANKGIKALNIPLMPEVPVPEELFEIDRKKIIGLTIDPMHLIEIRRHRVDNMMKIPTELKYANAERVLDELEFADKIMRKLKCKVIDVTKRAIEDTALIIMESVFSDRII.

ADP is bound at residue 147-154; the sequence is GLSRTSKT.

This sequence belongs to the pyruvate, phosphate/water dikinase regulatory protein family. PDRP subfamily.

The enzyme catalyses N(tele)-phospho-L-histidyl/L-threonyl-[pyruvate, phosphate dikinase] + ADP = N(tele)-phospho-L-histidyl/O-phospho-L-threonyl-[pyruvate, phosphate dikinase] + AMP + H(+). The catalysed reaction is N(tele)-phospho-L-histidyl/O-phospho-L-threonyl-[pyruvate, phosphate dikinase] + phosphate + H(+) = N(tele)-phospho-L-histidyl/L-threonyl-[pyruvate, phosphate dikinase] + diphosphate. Functionally, bifunctional serine/threonine kinase and phosphorylase involved in the regulation of the pyruvate, phosphate dikinase (PPDK) by catalyzing its phosphorylation/dephosphorylation. In Clostridium botulinum (strain ATCC 19397 / Type A), this protein is Putative pyruvate, phosphate dikinase regulatory protein.